A 219-amino-acid chain; its full sequence is Thymidylate kinase (219 aa).

9–16 (GIEGCGKT) is a binding site for ATP.

Belongs to the thymidylate kinase family.

The enzyme catalyses dTMP + ATP = dTDP + ADP. Phosphorylation of dTMP to form dTDP in both de novo and salvage pathways of dTTP synthesis. The chain is Thymidylate kinase from Syntrophus aciditrophicus (strain SB).